A 356-amino-acid polypeptide reads, in one-letter code: Peritrophin-44 (356 aa).

Residues 1–23 (MKELQITTGCLLLMVAAIGKTSA) form the signal peptide. Chitin-binding type-2 domains lie at 28–85 (SETC…KCIS), 88–146 (KNAC…ECTA), 147–201 (DSIC…PCLA), 220–283 (NFVC…PCTF), and 286–355 (CGNL…YKLC). An intrachain disulfide couples Cys-62 to Cys-75. N-linked (GlcNAc...) asparagine glycosylation is present at Asn-114. 3 disulfide bridges follow: Cys-122-Cys-135, Cys-181-Cys-193, and Cys-262-Cys-273. Asn-309 carries N-linked (GlcNAc...) asparagine glycosylation.

Glycosylated. In terms of tissue distribution, larval peritrophic membrane.

Its function is as follows. May have roles in the maintenance of peritrophic membrane structure and in the determination of the porosity of the peritrophic membrane. May bind chitin or related oligosaccharide structures. The sequence is that of Peritrophin-44 from Lucilia cuprina (Green bottle fly).